A 387-amino-acid polypeptide reads, in one-letter code: Eukaryotic translation initiation factor 3 subunit M (387 aa).

One can recognise a PCI domain in the interval 181–340; the sequence is LSSKVMIELL…RKVHISSTMH (160 aa).

The protein belongs to the eIF-3 subunit M family. As to quaternary structure, component of the eukaryotic translation initiation factor 3 (eIF-3) complex. The eIF-3 complex interacts with pix.

It is found in the cytoplasm. It localises to the golgi apparatus. Functionally, component of the eukaryotic translation initiation factor 3 (eIF-3) complex, which is involved in protein synthesis of a specialized repertoire of mRNAs and, together with other initiation factors, stimulates binding of mRNA and methionyl-tRNAi to the 40S ribosome. The eIF-3 complex specifically targets and initiates translation of a subset of mRNAs involved in cell proliferation. This is Eukaryotic translation initiation factor 3 subunit M from Drosophila mojavensis (Fruit fly).